A 166-amino-acid chain; its full sequence is Putative methyltransferase Rv1506c (166 aa).

It belongs to the methyltransferase superfamily.

Its function is as follows. Probably plays a role in host phagosome maturation arrest, as well as a role in the synthesis of acyltrehalose-containing glycolipids. This chain is Putative methyltransferase Rv1506c, found in Mycobacterium tuberculosis (strain ATCC 25618 / H37Rv).